A 644-amino-acid polypeptide reads, in one-letter code: Biosynthetic arginine decarboxylase (644 aa).

K100 carries the N6-(pyridoxal phosphate)lysine modification. Position 282-292 (282-292 (CDVGGGLAIDY)) interacts with substrate.

The protein belongs to the Orn/Lys/Arg decarboxylase class-II family. SpeA subfamily. Mg(2+) serves as cofactor. Pyridoxal 5'-phosphate is required as a cofactor.

The enzyme catalyses L-arginine + H(+) = agmatine + CO2. Functionally, catalyzes the biosynthesis of agmatine from arginine. This chain is Biosynthetic arginine decarboxylase, found in Gloeobacter violaceus (strain ATCC 29082 / PCC 7421).